The following is a 2028-amino-acid chain: Genome polyprotein (2028 aa).

One can recognise an Alphavirus-like MT domain in the interval 65–226 (SGFGHAAHPH…TQPRSALDWL (162 aa)). Disordered stretches follow at residues 544–603 (GSAP…ESVA) and 661–682 (VTPG…PSAS). Residues 550 to 599 (LSLPPPEGSLLPVEPPLAPSDPEPALEPSPPAASVPAPAPAPASEPPPSP) are compositionally biased toward pro residues. Positions 668-677 (PEPDTARLDA) are enriched in basic and acidic residues. The Peptidase C21 domain maps to 669–824 (EPDTARLDAD…SLPALVGASS (156 aa)). Active-site for protease activity residues include Cys-723 and His-806. The region spanning 882 to 1039 (DPKSARERFL…YLRPYVDFYC (158 aa)) is the (+)RNA virus helicase ATP-binding domain. The (+)RNA virus helicase C-terminal domain maps to 1040–1172 (FWSRRIPQNV…RRLSVRSLFS (133 aa)). Positions 1508 to 1614 (AVKLANDYTA…DSEPPVRDQW (107 aa)) constitute a RdRp catalytic domain. The interval 1828–1854 (SMADNATQVGPVPPRDDRVDRQPPLPD) is disordered.

The protein belongs to the Tymoviridae non-structural replication polyprotein family. In terms of processing, specific enzymatic cleavages by the host yield mature proteins.

It localises to the virion. The catalysed reaction is RNA(n) + a ribonucleoside 5'-triphosphate = RNA(n+1) + diphosphate. It catalyses the reaction Thiol-dependent hydrolysis of ester, thioester, amide, peptide and isopeptide bonds formed by the C-terminal Gly of ubiquitin (a 76-residue protein attached to proteins as an intracellular targeting signal).. Acts as a cysteine protease, methyltransferase and deubiquitinase. The cysteine protease activity cleaves the polyprotein giving rise to mature proteins. The methyltransferase domain is probably involved in viral RNA capping. The deubiquitylating activity counteracts the degradation of the viral polymerase mediated by the host ubiquitin-proteasome system. The polymerase is thus stabilized and infectivity is increased. Its function is as follows. RNA-directed RNA polymerase is responsible for the replication and transcription of the genome. Functionally, capsid protein CP1 and CP2 assemble to form an icosahedral capsid, about 30 nm in diameter, and consisting of capsid proteins CP1 and CP2 in a 1:3 ratio. The capsid encapsulates the single-stranded RNA genome. While CP1 is produced as a C-terminal fusion of the replication protein, CP2 may be expressed from a 3'-co-terminal subgenomic RNA. The protein is Genome polyprotein of Zea mays (Maize).